The chain runs to 352 residues: PhoH-like protein (352 aa).

The tract at residues methionine 1 to valine 21 is disordered. Positions alanine 9–glutamine 20 are enriched in low complexity. Residue glycine 150–threonine 157 participates in ATP binding.

The protein belongs to the PhoH family.

It is found in the cytoplasm. This is PhoH-like protein from Mycobacterium bovis (strain ATCC BAA-935 / AF2122/97).